The primary structure comprises 438 residues: 3-phosphoshikimate 1-carboxyvinyltransferase (438 aa).

3-phosphoshikimate-binding residues include lysine 25, serine 26, and arginine 30. Phosphoenolpyruvate is bound at residue lysine 25. Residues glycine 99 and arginine 128 each contribute to the phosphoenolpyruvate site. 3-phosphoshikimate is bound by residues serine 173, glutamine 175, aspartate 325, and lysine 352. Glutamine 175 provides a ligand contact to phosphoenolpyruvate. Aspartate 325 acts as the Proton acceptor in catalysis. The phosphoenolpyruvate site is built by arginine 356 and arginine 398.

This sequence belongs to the EPSP synthase family. In terms of assembly, monomer.

It localises to the cytoplasm. It catalyses the reaction 3-phosphoshikimate + phosphoenolpyruvate = 5-O-(1-carboxyvinyl)-3-phosphoshikimate + phosphate. It participates in metabolic intermediate biosynthesis; chorismate biosynthesis; chorismate from D-erythrose 4-phosphate and phosphoenolpyruvate: step 6/7. Catalyzes the transfer of the enolpyruvyl moiety of phosphoenolpyruvate (PEP) to the 5-hydroxyl of shikimate-3-phosphate (S3P) to produce enolpyruvyl shikimate-3-phosphate and inorganic phosphate. This Prochlorococcus marinus subsp. pastoris (strain CCMP1986 / NIES-2087 / MED4) protein is 3-phosphoshikimate 1-carboxyvinyltransferase.